Reading from the N-terminus, the 286-residue chain is Ribosome-inactivating protein beta-momorcharin (286 aa).

The N-terminal stretch at 1–23 is a signal peptide; it reads MVKCLLLSFLIIAIFIGVPTAKG. Residue Asn-74 is glycosylated (N-linked (GlcNAc...) asparagine). Residues Tyr-93, Tyr-132, Glu-181, and Arg-184 contribute to the active site.

Belongs to the ribosome-inactivating protein family. Type 1 RIP subfamily. Bound to a branched hexasaccharide.

It catalyses the reaction Endohydrolysis of the N-glycosidic bond at one specific adenosine on the 28S rRNA.. Functionally, irreversibly relaxes supercoiled DNA and catalyzes double-stranded breakage. Also acts as a ribosome inactivating protein. This is Ribosome-inactivating protein beta-momorcharin (MAP30) from Momordica charantia (Bitter gourd).